We begin with the raw amino-acid sequence, 297 residues long: Acetyl-coenzyme A carboxylase carboxyl transferase subunit beta (297 aa).

One can recognise a CoA carboxyltransferase N-terminal domain in the interval 25-294; that stretch reads LWVKCPETGQ…LPPKGRLPRP (270 aa).

The protein belongs to the AccD/PCCB family. Acetyl-CoA carboxylase is a heterohexamer composed of biotin carboxyl carrier protein (AccB), biotin carboxylase (AccC) and two subunits each of ACCase subunit alpha (AccA) and ACCase subunit beta (AccD).

Its subcellular location is the cytoplasm. The catalysed reaction is N(6)-carboxybiotinyl-L-lysyl-[protein] + acetyl-CoA = N(6)-biotinyl-L-lysyl-[protein] + malonyl-CoA. It participates in lipid metabolism; malonyl-CoA biosynthesis; malonyl-CoA from acetyl-CoA: step 1/1. Functionally, component of the acetyl coenzyme A carboxylase (ACC) complex. Biotin carboxylase (BC) catalyzes the carboxylation of biotin on its carrier protein (BCCP) and then the CO(2) group is transferred by the transcarboxylase to acetyl-CoA to form malonyl-CoA. This chain is Acetyl-coenzyme A carboxylase carboxyl transferase subunit beta, found in Xanthobacter autotrophicus (strain ATCC BAA-1158 / Py2).